The following is a 119-amino-acid chain: Small ribosomal subunit protein uS13 (119 aa).

The segment at 92–119 (RRGLPVRGQQTQTNARTRKGPRRGPASR) is disordered.

The protein belongs to the universal ribosomal protein uS13 family. As to quaternary structure, part of the 30S ribosomal subunit. Forms a loose heterodimer with protein S19. Forms two bridges to the 50S subunit in the 70S ribosome.

In terms of biological role, located at the top of the head of the 30S subunit, it contacts several helices of the 16S rRNA. In the 70S ribosome it contacts the 23S rRNA (bridge B1a) and protein L5 of the 50S subunit (bridge B1b), connecting the 2 subunits; these bridges are implicated in subunit movement. Contacts the tRNAs in the A and P-sites. This Halorhodospira halophila (strain DSM 244 / SL1) (Ectothiorhodospira halophila (strain DSM 244 / SL1)) protein is Small ribosomal subunit protein uS13.